A 430-amino-acid chain; its full sequence is UDP-N-acetylglucosamine 1-carboxyvinyltransferase (430 aa).

Residue 22–23 coordinates phosphoenolpyruvate; that stretch reads KN. R102 is a UDP-N-acetyl-alpha-D-glucosamine binding site. Residue C126 is the Proton donor of the active site. At C126 the chain carries 2-(S-cysteinyl)pyruvic acid O-phosphothioketal. UDP-N-acetyl-alpha-D-glucosamine is bound by residues 131-135, 172-175, D317, and I339; these read RPVDL and KVSV.

The protein belongs to the EPSP synthase family. MurA subfamily.

The protein localises to the cytoplasm. The enzyme catalyses phosphoenolpyruvate + UDP-N-acetyl-alpha-D-glucosamine = UDP-N-acetyl-3-O-(1-carboxyvinyl)-alpha-D-glucosamine + phosphate. The protein operates within cell wall biogenesis; peptidoglycan biosynthesis. In terms of biological role, cell wall formation. Adds enolpyruvyl to UDP-N-acetylglucosamine. This Rhizobium leguminosarum bv. trifolii (strain WSM2304) protein is UDP-N-acetylglucosamine 1-carboxyvinyltransferase.